Reading from the N-terminus, the 344-residue chain is Heat-inducible transcription repressor HrcA (344 aa).

Belongs to the HrcA family.

Negative regulator of class I heat shock genes (grpE-dnaK-dnaJ and groELS operons). Prevents heat-shock induction of these operons. The sequence is that of Heat-inducible transcription repressor HrcA from Geobacillus stearothermophilus (Bacillus stearothermophilus).